The sequence spans 380 residues: Cytochrome b (380 aa).

4 consecutive transmembrane segments (helical) span residues 34-54, 78-99, 114-134, and 179-199; these read FGSLLGICLITQILTGLLLAM, WLIRNLHANGASFFFICIYFHI, WNTGIILLLTLMATAFVGYVL, and FFALHFLLPFMITGLTLIHLT. 2 residues coordinate heme b: H84 and H98. Residues H183 and H197 each coordinate heme b. Residue H202 participates in a ubiquinone binding. Helical transmembrane passes span 227–247, 289–309, 321–341, and 348–368; these read TKDILGFALMLLPLTTLALFS, LGGVLALAASVLILFLSPLLH, LSQLLFWTLVANLLILTWIGS, and FIIIGQLASTTYFIILLILFP.

It belongs to the cytochrome b family. The cytochrome bc1 complex contains 11 subunits: 3 respiratory subunits (MT-CYB, CYC1 and UQCRFS1), 2 core proteins (UQCRC1 and UQCRC2) and 6 low-molecular weight proteins (UQCRH/QCR6, UQCRB/QCR7, UQCRQ/QCR8, UQCR10/QCR9, UQCR11/QCR10 and a cleavage product of UQCRFS1). This cytochrome bc1 complex then forms a dimer. The cofactor is heme b.

It localises to the mitochondrion inner membrane. Functionally, component of the ubiquinol-cytochrome c reductase complex (complex III or cytochrome b-c1 complex) that is part of the mitochondrial respiratory chain. The b-c1 complex mediates electron transfer from ubiquinol to cytochrome c. Contributes to the generation of a proton gradient across the mitochondrial membrane that is then used for ATP synthesis. This Pygoscelis papua (Gentoo penguin) protein is Cytochrome b (MT-CYB).